Consider the following 892-residue polypeptide: Alanine--tRNA ligase (892 aa).

The Zn(2+) site is built by His-594, His-598, Cys-702, and His-706.

It belongs to the class-II aminoacyl-tRNA synthetase family. Zn(2+) is required as a cofactor.

It is found in the cytoplasm. The enzyme catalyses tRNA(Ala) + L-alanine + ATP = L-alanyl-tRNA(Ala) + AMP + diphosphate. In terms of biological role, catalyzes the attachment of alanine to tRNA(Ala) in a two-step reaction: alanine is first activated by ATP to form Ala-AMP and then transferred to the acceptor end of tRNA(Ala). Also edits incorrectly charged Ser-tRNA(Ala) and Gly-tRNA(Ala) via its editing domain. The sequence is that of Alanine--tRNA ligase from Pyrobaculum aerophilum (strain ATCC 51768 / DSM 7523 / JCM 9630 / CIP 104966 / NBRC 100827 / IM2).